The following is a 137-amino-acid chain: Large ribosomal subunit protein uL16 (137 aa).

This sequence belongs to the universal ribosomal protein uL16 family. Part of the 50S ribosomal subunit.

Binds 23S rRNA and is also seen to make contacts with the A and possibly P site tRNAs. The chain is Large ribosomal subunit protein uL16 from Mycoplasma mycoides subsp. mycoides SC (strain CCUG 32753 / NCTC 10114 / PG1).